Consider the following 422-residue polypeptide: Gamma-glutamyl phosphate reductase (422 aa).

This sequence belongs to the gamma-glutamyl phosphate reductase family.

The protein localises to the cytoplasm. It catalyses the reaction L-glutamate 5-semialdehyde + phosphate + NADP(+) = L-glutamyl 5-phosphate + NADPH + H(+). It functions in the pathway amino-acid biosynthesis; L-proline biosynthesis; L-glutamate 5-semialdehyde from L-glutamate: step 2/2. In terms of biological role, catalyzes the NADPH-dependent reduction of L-glutamate 5-phosphate into L-glutamate 5-semialdehyde and phosphate. The product spontaneously undergoes cyclization to form 1-pyrroline-5-carboxylate. This is Gamma-glutamyl phosphate reductase from Nitrosomonas europaea (strain ATCC 19718 / CIP 103999 / KCTC 2705 / NBRC 14298).